We begin with the raw amino-acid sequence, 397 residues long: Acetyl-CoA acetyltransferase, cytosolic (397 aa).

An N-acetylmethionine modification is found at Met1. Catalysis depends on Cys92, which acts as the Acyl-thioester intermediate. Lys200 carries the post-translational modification N6-acetyllysine. 2 residues coordinate CoA: Arg223 and Ser226. An N6-acetyllysine mark is found at Lys233 and Lys235. Ser252 contributes to the CoA binding site. Catalysis depends on Cys383, which acts as the Proton donor/acceptor.

The protein belongs to the thiolase-like superfamily. Thiolase family. Homotetramer.

Its subcellular location is the cytoplasm. It localises to the cytosol. The enzyme catalyses 2 acetyl-CoA = acetoacetyl-CoA + CoA. It participates in lipid metabolism; fatty acid metabolism. Its function is as follows. Involved in the biosynthetic pathway of cholesterol. The sequence is that of Acetyl-CoA acetyltransferase, cytosolic (Acat2) from Mus musculus (Mouse).